The primary structure comprises 730 residues: Polyphosphate kinase (730 aa).

A compositionally biased stretch (basic and acidic residues) spans 1–21; the sequence is MMRHDRNVTEIDAETRPDENL. Positions 1 to 39 are disordered; the sequence is MMRHDRNVTEIDAETRPDENLWHSGDSAVGAPPAATPAA. Residue asparagine 86 participates in ATP binding. Mg(2+) is bound by residues arginine 423 and arginine 453. Residue histidine 483 is the Phosphohistidine intermediate of the active site. ATP-binding residues include tyrosine 516, arginine 612, and histidine 640.

This sequence belongs to the polyphosphate kinase 1 (PPK1) family. The cofactor is Mg(2+). An intermediate of this reaction is the autophosphorylated ppk in which a phosphate is covalently linked to a histidine residue through a N-P bond.

It catalyses the reaction [phosphate](n) + ATP = [phosphate](n+1) + ADP. In terms of biological role, catalyzes the reversible transfer of the terminal phosphate of ATP to form a long-chain polyphosphate (polyP). The polypeptide is Polyphosphate kinase (Mycobacterium avium (strain 104)).